Here is a 562-residue protein sequence, read N- to C-terminus: Arginine--tRNA ligase 1 (562 aa).

The short motif at 122-132 is the 'HIGH' region element; the sequence is PNIAKPFSMGH.

This sequence belongs to the class-I aminoacyl-tRNA synthetase family. As to quaternary structure, monomer.

It is found in the cytoplasm. The enzyme catalyses tRNA(Arg) + L-arginine + ATP = L-arginyl-tRNA(Arg) + AMP + diphosphate. This chain is Arginine--tRNA ligase 1, found in Bacillus cereus (strain ZK / E33L).